The chain runs to 132 residues: Small ribosomal subunit protein uS8 (132 aa).

Belongs to the universal ribosomal protein uS8 family. As to quaternary structure, part of the 30S ribosomal subunit. Contacts proteins S5 and S12.

In terms of biological role, one of the primary rRNA binding proteins, it binds directly to 16S rRNA central domain where it helps coordinate assembly of the platform of the 30S subunit. The polypeptide is Small ribosomal subunit protein uS8 (Streptococcus agalactiae serotype Ia (strain ATCC 27591 / A909 / CDC SS700)).